A 585-amino-acid polypeptide reads, in one-letter code: Protein FAM83D (585 aa).

Positions 1–296 (MAARFELLDD…LYAQSEPISS (296 aa)) are DUF1669. The residue at position 295 (S295) is a Phosphoserine. Disordered regions lie at residues 334 to 411 (LSST…TSSS) and 425 to 482 (AASS…SQGS). The interval 337–585 (TPRKSNLGPE…RDIALYPPYQ (249 aa)) is required for interaction with KIF22 and function in chromosome congression. Basic and acidic residues-rich tracts occupy residues 347–360 (EPPKDRAKPKRPDS) and 369–383 (DYFHSHKDQLEDSKV). Over residues 425–441 (AASSQATVWSKSTTTQT) the composition is skewed to polar residues. S458 is modified (phosphoserine). Residues 458–482 (SPASKMSVSRSSSVRSSSSVSSQGS) are compositionally biased toward low complexity. T511 carries the phosphothreonine modification.

It belongs to the FAM83 family. In terms of assembly, interacts with FBXW7; promotes FBXW7 degradation. May interact with RAF1. Interacts with KIF22; recruits KIF22 to mitotic spindle microtubules. Interacts (via C-terminus) with DYNLL1. Interacts with HMMR. Directly interacts (via DUF1669) with CSNK1A1 and CSNK1A1L. Phosphorylated during mitosis.

It localises to the cytoplasm. Its subcellular location is the cytoskeleton. It is found in the spindle. The protein resides in the spindle pole. Its function is as follows. Through the degradation of FBXW7, may act indirectly on the expression and downstream signaling of MTOR, JUN and MYC. May play also a role in cell proliferation through activation of the ERK1/ERK2 signaling cascade. May also be important for proper chromosome congression and alignment during mitosis through its interaction with KIF22. The chain is Protein FAM83D from Mus musculus (Mouse).